Consider the following 486-residue polypeptide: Transcriptional regulator ERG (486 aa).

Over residues 41 to 54 (TASSSSDYGQTSKM) the composition is skewed to polar residues. Disordered stretches follow at residues 41 to 62 (TASSSSDYGQTSKMSPRVPQQD) and 79 to 99 (PSQVNGSRNSPDECSVNKGGK). Phosphoserine occurs at positions 55, 88, and 103. The PNT domain maps to 120–206 (VPPPNMTTNE…SHLHYLRETP (87 aa)). The interval 249–311 (QRITTRPDLP…ILGPTSSRLA (63 aa)) is disordered. Over residues 271–284 (SHLTPQSKAAQPSP) the composition is skewed to polar residues. Lysine 289 is covalently cross-linked (Glycyl lysine isopeptide (Lys-Gly) (interchain with G-Cter in SUMO2)). The ETS DNA-binding region spans 318-398 (IQLWQFLLEL…HGKRYAYKFD (81 aa)).

The protein belongs to the ETS family. As to quaternary structure, identified in a IGF2BP1-dependent mRNP granule complex containing untranslated mRNAs. Interacts with SETDB1.

The protein localises to the nucleus. It is found in the cytoplasm. Transcriptional regulator. May participate in transcriptional regulation through the recruitment of SETDB1 histone methyltransferase and subsequent modification of local chromatin structure. This chain is Transcriptional regulator ERG (Erg), found in Mus musculus (Mouse).